The primary structure comprises 245 residues: Orotidine 5'-phosphate decarboxylase (245 aa).

Residues Asp22, Lys44, 71 to 80 (DLKFHDIPNT), Thr131, Arg192, Gln201, Gly221, and Arg222 contribute to the substrate site. The active-site Proton donor is the Lys73.

The protein belongs to the OMP decarboxylase family. Type 1 subfamily. As to quaternary structure, homodimer.

The enzyme catalyses orotidine 5'-phosphate + H(+) = UMP + CO2. It participates in pyrimidine metabolism; UMP biosynthesis via de novo pathway; UMP from orotate: step 2/2. Functionally, catalyzes the decarboxylation of orotidine 5'-monophosphate (OMP) to uridine 5'-monophosphate (UMP). In Klebsiella pneumoniae (strain 342), this protein is Orotidine 5'-phosphate decarboxylase.